The chain runs to 367 residues: Developmentally-regulated GTP-binding protein 1 (367 aa).

Ser-2 carries the N-acetylserine modification. Residues 2-16 (SSTLAKIAEIEAEMA) form a required for interaction with STK16 region. (3S)-3-hydroxylysine is present on Lys-22. The 226-residue stretch at 65–290 (ARIGFVGFPS…LLEKIWDYLK (226 aa)) folds into the OBG-type G domain. GTP-binding positions include 71-78 (GFPSVGKS), 96-100 (FTTLT), 117-120 (DLPG), 248-251 (NKID), and 271-273 (SAH). Mg(2+) is bound by residues Ser-78 and Thr-98. Thr-100 bears the Phosphothreonine; by STK16 mark. The region spanning 290–366 (KLVRIYTKPK…EDEDVIQIVK (77 aa)) is the TGS domain.

Belongs to the TRAFAC class OBG-HflX-like GTPase superfamily. OBG GTPase family. In terms of assembly, interacts (via its C-terminal) with TAL1. Interacts with DFRP1/ZC3H15; this interaction prevents DRG1 poly-ubiquitination and degradation by proteasome. DRG1-ZC3H15/DFRP1 complex co-sediments with polysomes. Interacts with STK16. Interacts with JMJD7. Post-translationally, sumoylated by UBE2I in response to MEKK1-mediated stimuli. In terms of processing, hydroxylated (with S stereochemistry) at C-3 of Lys-22 by JMJD7. Phosphorylated at Thr-100 by STK16. Post-translationally, polyubiquitinated; this modification induces proteolytic degradation and is impaired by interaction with ZC3H15.

Its subcellular location is the nucleus. The protein localises to the cytoplasm. The enzyme catalyses GTP + H2O = GDP + phosphate + H(+). Its activity is regulated as follows. The GTPase activity is enhanced by potassium ions as well as by DFRP1 binding. In terms of biological role, catalyzes the conversion of GTP to GDP through hydrolysis of the gamma-phosphate bond in GTP. Appears to have an intrinsic GTPase activity that is stimulated by ZC3H15/DFRP1 binding likely by increasing the affinity for the potassium ions. When hydroxylated at C-3 of 'Lys-22' by JMJD7, may bind to RNA and play a role in translation. Binds to microtubules and promotes microtubule polymerization and bundling that are required for mitotic spindle assembly during prophase to anaphase transition. GTPase activity is not necessary for these microtubule-related functions. The protein is Developmentally-regulated GTP-binding protein 1 (DRG1) of Bos taurus (Bovine).